The sequence spans 427 residues: Glucan 1,3-beta-glucosidase 2 (427 aa).

An N-terminal signal peptide occupies residues 1–17; it reads MLISTFIISSLLSIALA. The active-site Proton donor is the E217. Cystine bridges form between C299–C426 and C324–C355. E316 acts as the Nucleophile in catalysis.

It belongs to the glycosyl hydrolase 5 (cellulase A) family.

The protein resides in the secreted. It carries out the reaction Successive hydrolysis of beta-D-glucose units from the non-reducing ends of (1-&gt;3)-beta-D-glucans, releasing alpha-glucose.. In terms of biological role, beta-glucanases participate in the metabolism of beta-glucan, the main structural component of the cell wall. It could also function biosynthetically as a transglycosylase. The protein is Glucan 1,3-beta-glucosidase 2 (EXG2) of Wickerhamomyces anomalus (Yeast).